The sequence spans 489 residues: Cytochrome P450 2C70 (489 aa).

The signal sequence occupies residues 1-27 (MALFIFLGIWLSCFLFLFLWNQHRGRG). Cysteine 434 is a heme binding site.

Belongs to the cytochrome P450 family. It depends on heme as a cofactor. Expressed in liver.

Its subcellular location is the endoplasmic reticulum membrane. The protein localises to the microsome membrane. The enzyme catalyses chenodeoxycholate + reduced [NADPH--hemoprotein reductase] + O2 = alpha-muricholate + oxidized [NADPH--hemoprotein reductase] + H2O + H(+). It carries out the reaction ursodeoxycholate + reduced [NADPH--hemoprotein reductase] + O2 = beta-muricholate + oxidized [NADPH--hemoprotein reductase] + H2O + H(+). Its function is as follows. A cytochrome P450 monooxygenase involved in muricholic acid (MCA) synthesis. Hydroxylates at the 6-beta position two major bile acids, chenodeoxycholic acid (CDCA) and ursodeoxycholic acid (UDCA) to form alpha-MCA and beta-MCA, respectively. May regulate NR1H4/farnesoid X receptor signaling, as taurine-conjugated MCAs are antagonists of NR1H4. Mechanistically, uses molecular oxygen inserting one oxygen atom into a substrate, and reducing the second into a water molecule, with two electrons provided by NADPH via cytochrome P450 reductase (CPR; NADPH-ferrihemoprotein reductase). The polypeptide is Cytochrome P450 2C70 (Mus musculus (Mouse)).